Consider the following 312-residue polypeptide: Pseudouridine-5'-phosphate glycosidase (312 aa).

The active-site Proton donor is Glu31. The substrate site is built by Lys93 and Val113. Residue Asp145 participates in Mn(2+) binding. 147–149 (SAD) is a binding site for substrate. Lys166 functions as the Nucleophile in the catalytic mechanism.

Belongs to the pseudouridine-5'-phosphate glycosidase family. As to quaternary structure, homotrimer. Mn(2+) is required as a cofactor. The cofactor is Fe(2+). It depends on Co(2+) as a cofactor.

The enzyme catalyses D-ribose 5-phosphate + uracil = psi-UMP + H2O. Inhibited by Zn(2+) and Ni(2+). In terms of biological role, catalyzes the reversible cleavage of pseudouridine 5'-phosphate (PsiMP) to ribose 5-phosphate and uracil. Functions biologically in the cleavage direction, as part of a pseudouridine degradation pathway. The sequence is that of Pseudouridine-5'-phosphate glycosidase from Escherichia coli (strain K12).